Reading from the N-terminus, the 146-residue chain is Probable NADH dehydrogenase [ubiquinone] 1 alpha subcomplex subunit 12 (146 aa).

Belongs to the complex I NDUFA12 subunit family. As to quaternary structure, complex I is composed of 45 different subunits.

It is found in the mitochondrion inner membrane. Functionally, accessory subunit of the mitochondrial membrane respiratory chain NADH dehydrogenase (Complex I), that is believed not to be involved in catalysis. Complex I functions in the transfer of electrons from NADH to the respiratory chain. The immediate electron acceptor for the enzyme is believed to be ubiquinone. This chain is Probable NADH dehydrogenase [ubiquinone] 1 alpha subcomplex subunit 12, found in Caenorhabditis elegans.